The following is a 103-amino-acid chain: Large ribosomal subunit protein bL21 (103 aa).

This sequence belongs to the bacterial ribosomal protein bL21 family. As to quaternary structure, part of the 50S ribosomal subunit. Contacts protein L20.

In terms of biological role, this protein binds to 23S rRNA in the presence of protein L20. The chain is Large ribosomal subunit protein bL21 from Delftia acidovorans (strain DSM 14801 / SPH-1).